The sequence spans 393 residues: S-adenosylmethionine synthase (393 aa).

His-17 contacts ATP. Mg(2+) is bound at residue Asp-19. Glu-45 serves as a coordination point for K(+). Positions 58 and 106 each coordinate L-methionine. Residues 106-116 (QSAHIAQGVNA) form a flexible loop region. ATP contacts are provided by residues 171–173 (DAK), 237–238 (KF), Asp-246, 252–253 (RK), Ala-269, and Lys-273. An L-methionine-binding site is contributed by Asp-246. Lys-277 serves as a coordination point for L-methionine.

This sequence belongs to the AdoMet synthase family. As to quaternary structure, homotetramer; dimer of dimers. Requires Mg(2+) as cofactor. K(+) serves as cofactor.

It is found in the cytoplasm. It carries out the reaction L-methionine + ATP + H2O = S-adenosyl-L-methionine + phosphate + diphosphate. Its pathway is amino-acid biosynthesis; S-adenosyl-L-methionine biosynthesis; S-adenosyl-L-methionine from L-methionine: step 1/1. Catalyzes the formation of S-adenosylmethionine (AdoMet) from methionine and ATP. The overall synthetic reaction is composed of two sequential steps, AdoMet formation and the subsequent tripolyphosphate hydrolysis which occurs prior to release of AdoMet from the enzyme. The protein is S-adenosylmethionine synthase of Ruegeria pomeroyi (strain ATCC 700808 / DSM 15171 / DSS-3) (Silicibacter pomeroyi).